The following is a 28-amino-acid chain: Cyclotide vodo I2 (28 aa).

3 cysteine pairs are disulfide-bonded: Cys4–Cys18, Cys8–Cys20, and Cys13–Cys25.

This is a cyclic peptide. In terms of processing, contains 3 disulfide bonds.

In terms of biological role, probably participates in a plant defense mechanism. In Viola odorata (Sweet violet), this protein is Cyclotide vodo I2.